Consider the following 106-residue polypeptide: Pyrimidine/purine nucleoside phosphorylase (106 aa).

Belongs to the nucleoside phosphorylase PpnP family.

It catalyses the reaction a purine D-ribonucleoside + phosphate = a purine nucleobase + alpha-D-ribose 1-phosphate. The catalysed reaction is adenosine + phosphate = alpha-D-ribose 1-phosphate + adenine. The enzyme catalyses cytidine + phosphate = cytosine + alpha-D-ribose 1-phosphate. It carries out the reaction guanosine + phosphate = alpha-D-ribose 1-phosphate + guanine. It catalyses the reaction inosine + phosphate = alpha-D-ribose 1-phosphate + hypoxanthine. The catalysed reaction is thymidine + phosphate = 2-deoxy-alpha-D-ribose 1-phosphate + thymine. The enzyme catalyses uridine + phosphate = alpha-D-ribose 1-phosphate + uracil. It carries out the reaction xanthosine + phosphate = alpha-D-ribose 1-phosphate + xanthine. Its function is as follows. Catalyzes the phosphorolysis of diverse nucleosides, yielding D-ribose 1-phosphate and the respective free bases. Can use uridine, adenosine, guanosine, cytidine, thymidine, inosine and xanthosine as substrates. Also catalyzes the reverse reactions. This chain is Pyrimidine/purine nucleoside phosphorylase, found in Leptospira interrogans serogroup Icterohaemorrhagiae serovar copenhageni (strain Fiocruz L1-130).